The sequence spans 280 residues: 2-C-methyl-D-erythritol 4-phosphate cytidylyltransferase (280 aa).

The protein belongs to the IspD/TarI cytidylyltransferase family. IspD subfamily.

The catalysed reaction is 2-C-methyl-D-erythritol 4-phosphate + CTP + H(+) = 4-CDP-2-C-methyl-D-erythritol + diphosphate. It participates in isoprenoid biosynthesis; isopentenyl diphosphate biosynthesis via DXP pathway; isopentenyl diphosphate from 1-deoxy-D-xylulose 5-phosphate: step 2/6. Functionally, catalyzes the formation of 4-diphosphocytidyl-2-C-methyl-D-erythritol from CTP and 2-C-methyl-D-erythritol 4-phosphate (MEP). The chain is 2-C-methyl-D-erythritol 4-phosphate cytidylyltransferase from Psychrobacter cryohalolentis (strain ATCC BAA-1226 / DSM 17306 / VKM B-2378 / K5).